The sequence spans 168 residues: Cyclic pyranopterin monophosphate synthase (168 aa).

Residues 83–85 (LCH) and 121–122 (ME) contribute to the substrate site. Aspartate 136 is an active-site residue.

The protein belongs to the MoaC family. In terms of assembly, homohexamer; trimer of dimers.

The enzyme catalyses (8S)-3',8-cyclo-7,8-dihydroguanosine 5'-triphosphate = cyclic pyranopterin phosphate + diphosphate. It functions in the pathway cofactor biosynthesis; molybdopterin biosynthesis. Catalyzes the conversion of (8S)-3',8-cyclo-7,8-dihydroguanosine 5'-triphosphate to cyclic pyranopterin monophosphate (cPMP). This Nostoc sp. (strain PCC 7120 / SAG 25.82 / UTEX 2576) protein is Cyclic pyranopterin monophosphate synthase.